The primary structure comprises 248 residues: 2,3-bisphosphoglycerate-dependent phosphoglycerate mutase (248 aa).

Residues Arg-8–Asn-15, Thr-21–Gly-22, Arg-60, Glu-87–Tyr-90, Lys-98, Arg-114–Arg-115, and Gly-183–Asn-184 each bind substrate. The active-site Tele-phosphohistidine intermediate is His-9. The Proton donor/acceptor role is filled by Glu-87.

The protein belongs to the phosphoglycerate mutase family. BPG-dependent PGAM subfamily. As to quaternary structure, homodimer.

The catalysed reaction is (2R)-2-phosphoglycerate = (2R)-3-phosphoglycerate. It participates in carbohydrate degradation; glycolysis; pyruvate from D-glyceraldehyde 3-phosphate: step 3/5. In terms of biological role, catalyzes the interconversion of 2-phosphoglycerate and 3-phosphoglycerate. In Paraburkholderia phytofirmans (strain DSM 17436 / LMG 22146 / PsJN) (Burkholderia phytofirmans), this protein is 2,3-bisphosphoglycerate-dependent phosphoglycerate mutase.